Consider the following 92-residue polypeptide: Small ribosomal subunit protein bS18A (92 aa).

The protein belongs to the bacterial ribosomal protein bS18 family. In terms of assembly, part of the 30S ribosomal subunit. Forms a tight heterodimer with protein bS6.

Its function is as follows. Binds as a heterodimer with protein bS6 to the central domain of the 16S rRNA, where it helps stabilize the platform of the 30S subunit. The polypeptide is Small ribosomal subunit protein bS18A (Cupriavidus pinatubonensis (strain JMP 134 / LMG 1197) (Cupriavidus necator (strain JMP 134))).